A 528-amino-acid polypeptide reads, in one-letter code: Aspartic proteinase-like protein 1 (528 aa).

The N-terminal stretch at Met-1–Ala-22 is a signal peptide. Residues His-100 to Ser-449 enclose the Peptidase A1 domain. Residue Asp-118 is part of the active site. N-linked (GlcNAc...) asparagine glycans are attached at residues Asn-193 and Asn-217. Asp-333 is an active-site residue. N-linked (GlcNAc...) asparagine glycosylation is found at Asn-358 and Asn-391. Positions Ser-451–Ser-503 are disordered. A compositionally biased stretch (polar residues) spans Ser-464–Arg-482. Over residues Lys-494–Ser-503 the composition is skewed to low complexity. Residue Ser-503 is the site of GPI-anchor amidated serine attachment. A propeptide spans Ser-504–Met-528 (removed in mature form).

The protein belongs to the peptidase A1 family.

The protein localises to the cell membrane. The polypeptide is Aspartic proteinase-like protein 1 (Arabidopsis thaliana (Mouse-ear cress)).